Reading from the N-terminus, the 306-residue chain is Ribonuclease BN (306 aa).

Zn(2+) is bound by residues H64, H66, D68, H69, H141, D212, and H270. The Proton acceptor role is filled by D68.

The protein belongs to the RNase Z family. RNase BN subfamily. In terms of assembly, homodimer. Zn(2+) serves as cofactor.

Its function is as follows. Zinc phosphodiesterase, which has both exoribonuclease and endoribonuclease activities. This Klebsiella pneumoniae (strain 342) protein is Ribonuclease BN.